We begin with the raw amino-acid sequence, 108 residues long: Trp operon repressor homolog (108 aa).

Residues 59 to 82 (QRQISQLLGVGVATITRGSNELKS) mediate DNA binding.

It belongs to the TrpR family. As to quaternary structure, homodimer.

The protein localises to the cytoplasm. Functionally, this protein is an aporepressor. When complexed with L-tryptophan it binds the operator region of the trp operon and prevents the initiation of transcription. This is Trp operon repressor homolog from Aliivibrio fischeri (strain ATCC 700601 / ES114) (Vibrio fischeri).